The following is a 134-amino-acid chain: Large ribosomal subunit protein uL16c (134 aa).

The disordered stretch occupies residues 1–21; the sequence is MLSPKRTKYRKHHRGRMRGKA.

It belongs to the universal ribosomal protein uL16 family. As to quaternary structure, part of the 50S ribosomal subunit.

It is found in the plastid. Its subcellular location is the chloroplast. The polypeptide is Large ribosomal subunit protein uL16c (Chlorella vulgaris (Green alga)).